We begin with the raw amino-acid sequence, 436 residues long: Histidine--tRNA ligase (436 aa).

The protein belongs to the class-II aminoacyl-tRNA synthetase family. Homodimer.

The protein resides in the cytoplasm. The enzyme catalyses tRNA(His) + L-histidine + ATP = L-histidyl-tRNA(His) + AMP + diphosphate + H(+). This chain is Histidine--tRNA ligase, found in Prochlorococcus marinus (strain MIT 9303).